Consider the following 766-residue polypeptide: Phosphoribosylformylglycinamidine synthase subunit PurL (766 aa).

The active site involves histidine 66. ATP contacts are provided by tyrosine 69 and lysine 113. Mg(2+) is bound at residue glutamate 115. Residues 116 to 119 (SHNH) and arginine 138 each bind substrate. Histidine 117 (proton acceptor) is an active-site residue. Aspartate 139 is a Mg(2+) binding site. Glutamine 264 serves as a coordination point for substrate. Aspartate 292 is a Mg(2+) binding site. Residue 336-338 (ESQ) participates in substrate binding. ATP contacts are provided by asparagine 524 and glycine 561. Asparagine 562 contributes to the Mg(2+) binding site. Substrate is bound at residue serine 564.

It belongs to the FGAMS family. In terms of assembly, monomer. Part of the FGAM synthase complex composed of 1 PurL, 1 PurQ and 2 PurS subunits.

The protein localises to the cytoplasm. The catalysed reaction is N(2)-formyl-N(1)-(5-phospho-beta-D-ribosyl)glycinamide + L-glutamine + ATP + H2O = 2-formamido-N(1)-(5-O-phospho-beta-D-ribosyl)acetamidine + L-glutamate + ADP + phosphate + H(+). Its pathway is purine metabolism; IMP biosynthesis via de novo pathway; 5-amino-1-(5-phospho-D-ribosyl)imidazole from N(2)-formyl-N(1)-(5-phospho-D-ribosyl)glycinamide: step 1/2. Part of the phosphoribosylformylglycinamidine synthase complex involved in the purines biosynthetic pathway. Catalyzes the ATP-dependent conversion of formylglycinamide ribonucleotide (FGAR) and glutamine to yield formylglycinamidine ribonucleotide (FGAM) and glutamate. The FGAM synthase complex is composed of three subunits. PurQ produces an ammonia molecule by converting glutamine to glutamate. PurL transfers the ammonia molecule to FGAR to form FGAM in an ATP-dependent manner. PurS interacts with PurQ and PurL and is thought to assist in the transfer of the ammonia molecule from PurQ to PurL. This is Phosphoribosylformylglycinamidine synthase subunit PurL from Mycobacterium bovis (strain BCG / Pasteur 1173P2).